The sequence spans 226 residues: Leucyl/phenylalanyl-tRNA--protein transferase (226 aa).

Belongs to the L/F-transferase family.

It is found in the cytoplasm. It catalyses the reaction N-terminal L-lysyl-[protein] + L-leucyl-tRNA(Leu) = N-terminal L-leucyl-L-lysyl-[protein] + tRNA(Leu) + H(+). It carries out the reaction N-terminal L-arginyl-[protein] + L-leucyl-tRNA(Leu) = N-terminal L-leucyl-L-arginyl-[protein] + tRNA(Leu) + H(+). The catalysed reaction is L-phenylalanyl-tRNA(Phe) + an N-terminal L-alpha-aminoacyl-[protein] = an N-terminal L-phenylalanyl-L-alpha-aminoacyl-[protein] + tRNA(Phe). Functionally, functions in the N-end rule pathway of protein degradation where it conjugates Leu, Phe and, less efficiently, Met from aminoacyl-tRNAs to the N-termini of proteins containing an N-terminal arginine or lysine. The protein is Leucyl/phenylalanyl-tRNA--protein transferase of Ectopseudomonas mendocina (strain ymp) (Pseudomonas mendocina).